The sequence spans 364 residues: Probable UDP-arabinopyranose mutase 1 (364 aa).

The DXD motif motif lies at 103 to 105 (DDD). Arg151 is a glycosylation site (N-linked (Glc...) arginine).

It belongs to the RGP family. As to quaternary structure, homopentamer or homohexamer. Mn(2+) serves as cofactor. Requires Mg(2+) as cofactor. In terms of processing, reversibly glycosylated by UDP-glucose, UDP-xylose and UDP-galactose, but not UDP-mannose.

It is found in the secreted. The protein resides in the cell wall. Its subcellular location is the cell junction. It localises to the plasmodesma. The protein localises to the golgi apparatus. It catalyses the reaction UDP-beta-L-arabinofuranose = UDP-beta-L-arabinopyranose. Inhibited by inhibitor protein (IP) which may be a form of sucrose synthase. Functionally, probable UDP-L-arabinose mutase involved in the biosynthesis of cell wall non-cellulosic polysaccharides. Was initially shown to possess an autoglycosylating activity which is dependent on the presence of UDP-glucose and manganese. This chain is Probable UDP-arabinopyranose mutase 1, found in Pisum sativum (Garden pea).